Here is a 406-residue protein sequence, read N- to C-terminus: 2,3-bisphosphoglycerate-independent phosphoglycerate mutase (406 aa).

This sequence belongs to the BPG-independent phosphoglycerate mutase family. A-PGAM subfamily.

It carries out the reaction (2R)-2-phosphoglycerate = (2R)-3-phosphoglycerate. It functions in the pathway carbohydrate degradation; glycolysis; pyruvate from D-glyceraldehyde 3-phosphate: step 3/5. Its function is as follows. Catalyzes the interconversion of 2-phosphoglycerate and 3-phosphoglycerate. This chain is 2,3-bisphosphoglycerate-independent phosphoglycerate mutase, found in Methanococcus maripaludis (strain C6 / ATCC BAA-1332).